The chain runs to 138 residues: MKKKEQSLDIISLPIELDRTKIESRYRLALIAAQRAAELSLGATAKIDKKGKKVTTTALLEILSNKIDYITGEEAVKAKEKIDQIDVKKLLEDKRKAIPDLSELEKDLKVYLHGKESAEKMLEDLFTEGESNSSNEQE.

Belongs to the RNA polymerase subunit omega family. As to quaternary structure, the RNAP catalytic core consists of 2 alpha, 1 beta, 1 beta' and 1 omega subunit. When a sigma factor is associated with the core the holoenzyme is formed, which can initiate transcription.

The catalysed reaction is RNA(n) + a ribonucleoside 5'-triphosphate = RNA(n+1) + diphosphate. Promotes RNA polymerase assembly. Latches the N- and C-terminal regions of the beta' subunit thereby facilitating its interaction with the beta and alpha subunits. The sequence is that of DNA-directed RNA polymerase subunit omega from Thermodesulfovibrio yellowstonii (strain ATCC 51303 / DSM 11347 / YP87).